Here is a 406-residue protein sequence, read N- to C-terminus: Zinc finger protein 793 (406 aa).

Positions 8-79 constitute a KRAB domain; it reads VSFKDVVVGF…EAACPGCHCW (72 aa). 6 C2H2-type zinc fingers span residues 227–249, 255–277, 283–305, 311–333, 339–361, and 367–389; these read HVCS…QRSH, YGCT…QRIH, FECF…QRTH, FVCS…RKMH, YRCR…WRTH, and YGCN…QKIH.

It belongs to the krueppel C2H2-type zinc-finger protein family.

Its subcellular location is the nucleus. In terms of biological role, may be involved in transcriptional regulation. This Homo sapiens (Human) protein is Zinc finger protein 793 (ZNF793).